A 420-amino-acid chain; its full sequence is Serine hydroxymethyltransferase (420 aa).

(6S)-5,6,7,8-tetrahydrofolate contacts are provided by residues Leu123 and 127–129; that span reads GHL. Lys232 is modified (N6-(pyridoxal phosphate)lysine).

It belongs to the SHMT family. As to quaternary structure, homodimer. Pyridoxal 5'-phosphate is required as a cofactor.

Its subcellular location is the cytoplasm. The catalysed reaction is (6R)-5,10-methylene-5,6,7,8-tetrahydrofolate + glycine + H2O = (6S)-5,6,7,8-tetrahydrofolate + L-serine. The protein operates within one-carbon metabolism; tetrahydrofolate interconversion. Its pathway is amino-acid biosynthesis; glycine biosynthesis; glycine from L-serine: step 1/1. Functionally, catalyzes the reversible interconversion of serine and glycine with tetrahydrofolate (THF) serving as the one-carbon carrier. This reaction serves as the major source of one-carbon groups required for the biosynthesis of purines, thymidylate, methionine, and other important biomolecules. Also exhibits THF-independent aldolase activity toward beta-hydroxyamino acids, producing glycine and aldehydes, via a retro-aldol mechanism. The sequence is that of Serine hydroxymethyltransferase from Ehrlichia chaffeensis (strain ATCC CRL-10679 / Arkansas).